The following is a 342-amino-acid chain: Methionyl-tRNA formyltransferase (342 aa).

108–111 (SLLP) serves as a coordination point for (6S)-5,6,7,8-tetrahydrofolate.

The protein belongs to the Fmt family.

The catalysed reaction is L-methionyl-tRNA(fMet) + (6R)-10-formyltetrahydrofolate = N-formyl-L-methionyl-tRNA(fMet) + (6S)-5,6,7,8-tetrahydrofolate + H(+). Attaches a formyl group to the free amino group of methionyl-tRNA(fMet). The formyl group appears to play a dual role in the initiator identity of N-formylmethionyl-tRNA by promoting its recognition by IF2 and preventing the misappropriation of this tRNA by the elongation apparatus. This Prochlorococcus marinus (strain MIT 9313) protein is Methionyl-tRNA formyltransferase.